A 278-amino-acid chain; its full sequence is Putative transposase for insertion sequence element IS986/IS6110 (278 aa).

The Integrase catalytic domain maps to G101–Y268.

Involved in the transposition of the insertion sequence. The protein is Putative transposase for insertion sequence element IS986/IS6110 of Mycobacterium tuberculosis (strain CDC 1551 / Oshkosh).